Here is a 316-residue protein sequence, read N- to C-terminus: 2-phospho-L-lactate guanylyltransferase (316 aa).

The span at 72–85 shows a compositional bias: low complexity; that stretch reads TGVSTEAVSTSTST. 2 disordered regions span residues 72–107 and 119–138; these read TGVS…PTHT and LRDD…DGDK. The span at 92–107 shows a compositional bias: polar residues; it reads HNAASDNYVSQSPTHT.

It belongs to the CofC family. In terms of assembly, homodimer.

It carries out the reaction (2S)-2-phospholactate + GTP + H(+) = (2S)-lactyl-2-diphospho-5'-guanosine + diphosphate. Its pathway is cofactor biosynthesis; coenzyme F420 biosynthesis. Functionally, guanylyltransferase that catalyzes the activation of (2S)-2-phospholactate (2-PL) as (2S)-lactyl-2-diphospho-5'-guanosine, via the condensation of 2-PL with GTP. It is involved in the biosynthesis of coenzyme F420, a hydride carrier cofactor. In Haloquadratum walsbyi (strain DSM 16790 / HBSQ001), this protein is 2-phospho-L-lactate guanylyltransferase.